The primary structure comprises 387 residues: Succinate--CoA ligase [ADP-forming] subunit beta (387 aa).

The ATP-grasp domain occupies 9–236 (KELFAKHNVP…RDATDPLELK (228 aa)). ATP is bound by residues Lys-45, 52-54 (GRG), Ser-94, and Glu-99. Residues Asn-191 and Asp-205 each coordinate Mg(2+). Residues Asn-256 and 318-320 (GIT) contribute to the substrate site.

This sequence belongs to the succinate/malate CoA ligase beta subunit family. Heterotetramer of two alpha and two beta subunits. It depends on Mg(2+) as a cofactor.

The enzyme catalyses succinate + ATP + CoA = succinyl-CoA + ADP + phosphate. It catalyses the reaction GTP + succinate + CoA = succinyl-CoA + GDP + phosphate. The protein operates within carbohydrate metabolism; tricarboxylic acid cycle; succinate from succinyl-CoA (ligase route): step 1/1. Succinyl-CoA synthetase functions in the citric acid cycle (TCA), coupling the hydrolysis of succinyl-CoA to the synthesis of either ATP or GTP and thus represents the only step of substrate-level phosphorylation in the TCA. The beta subunit provides nucleotide specificity of the enzyme and binds the substrate succinate, while the binding sites for coenzyme A and phosphate are found in the alpha subunit. The polypeptide is Succinate--CoA ligase [ADP-forming] subunit beta (Mycobacterium sp. (strain JLS)).